We begin with the raw amino-acid sequence, 292 residues long: Protein LRATD1 (292 aa).

At Ser38 the chain carries Phosphoserine. An LRAT domain is found at 133 to 228; sequence PAPEPPAPAP…CRFGKREFKA (96 aa).

It belongs to the LRATD family. Only detected in testis. Highly expressed in colon cancer cells.

It is found in the cytoplasm. May play a role in cell morphology and motility. This chain is Protein LRATD1, found in Homo sapiens (Human).